We begin with the raw amino-acid sequence, 469 residues long: Tubulin gamma-2 chain (469 aa).

A GTP-binding site is contributed by 142–148 (AGGTGSG).

Belongs to the tubulin family.

Its subcellular location is the cytoplasm. It localises to the cytoskeleton. It is found in the microtubule organizing center. Tubulin is the major constituent of microtubules. The gamma chain is found at microtubule organizing centers (MTOC) such as the spindle poles, suggesting that it is involved in the minus-end nucleation of microtubule assembly. This chain is Tubulin gamma-2 chain (TUBG2), found in Zea mays (Maize).